The primary structure comprises 215 residues: Pyrrolidone-carboxylate peptidase (215 aa).

Residues glutamate 80, cysteine 143, and histidine 167 contribute to the active site.

The protein belongs to the peptidase C15 family. As to quaternary structure, homotetramer.

It localises to the cytoplasm. It carries out the reaction Release of an N-terminal pyroglutamyl group from a polypeptide, the second amino acid generally not being Pro.. In terms of biological role, removes 5-oxoproline from various penultimate amino acid residues except L-proline. The sequence is that of Pyrrolidone-carboxylate peptidase from Bacillus cereus (strain AH820).